We begin with the raw amino-acid sequence, 66 residues long: Large ribosomal subunit protein uL29 (66 aa).

Belongs to the universal ribosomal protein uL29 family.

The chain is Large ribosomal subunit protein uL29 from Bartonella tribocorum (strain CIP 105476 / IBS 506).